A 291-amino-acid polypeptide reads, in one-letter code: ATP synthase gamma chain (291 aa).

The protein belongs to the ATPase gamma chain family. F-type ATPases have 2 components, CF(1) - the catalytic core - and CF(0) - the membrane proton channel. CF(1) has five subunits: alpha(3), beta(3), gamma(1), delta(1), epsilon(1). CF(0) has three main subunits: a, b and c.

It is found in the cell inner membrane. Its function is as follows. Produces ATP from ADP in the presence of a proton gradient across the membrane. The gamma chain is believed to be important in regulating ATPase activity and the flow of protons through the CF(0) complex. The sequence is that of ATP synthase gamma chain from Ruegeria sp. (strain TM1040) (Silicibacter sp.).